The following is a 1039-amino-acid chain: Antigenic heat-stable 120 kDa protein (1039 aa).

Disordered regions lie at residues 1-115 (MSKD…TSDP), 408-438 (SSIE…MPQP), and 1020-1039 (QSEN…FPPR). Polar residues predominate over residues 31 to 44 (PISSTANKDGNPDT). Over residues 54–69 (EYTEEQKQKLEQEQKE) the composition is skewed to basic and acidic residues. The segment covering 85-114 (FSFTPASSTQSTPSISSLSGGISSDSQTSD) has biased composition (low complexity). The segment covering 424-438 (ANQPLQPETSQMPQP) has biased composition (polar residues). Positions 1030–1039 (IKRESSFPPR) are enriched in basic and acidic residues.

The protein resides in the cytoplasm. The polypeptide is Antigenic heat-stable 120 kDa protein (sca4) (Rickettsia felis (strain ATCC VR-1525 / URRWXCal2) (Rickettsia azadi)).